We begin with the raw amino-acid sequence, 331 residues long: Nucleotide sugar transporter SLC35B4 (331 aa).

11 helical membrane-spanning segments follow: residues 4-24, 30-50, 59-79, 92-112, 124-144, 153-173, 201-221, 229-249, 251-267, 268-288, and 294-314; these read AFAV…LELL, GCGN…GFLF, PAIP…VSVV, LHMI…IIIL, IALV…QVTV, GFQA…ALLM, ALPL…VVLF, VPVI…NVVT, YVCI…CTSL, TVTL…ILYF, and MWHW…TEVW. A Mediates endoplasmic reticulum retention motif is present at residues 326–331; sequence KDDKKD.

The protein belongs to the nucleotide-sugar transporter family. SLC35B subfamily.

It is found in the endoplasmic reticulum membrane. It carries out the reaction UDP-N-acetyl-alpha-D-glucosamine(in) + UDP-alpha-D-glucuronate(out) = UDP-N-acetyl-alpha-D-glucosamine(out) + UDP-alpha-D-glucuronate(in). The catalysed reaction is UDP-alpha-D-xylose(in) + UDP-alpha-D-glucuronate(out) = UDP-alpha-D-xylose(out) + UDP-alpha-D-glucuronate(in). In terms of biological role, antiporter that transports nucleotide sugars across the endoplasmic reticulum (ER) membrane in exchange for another nucleotide sugar. May couple UDP-alpha-D-glucuronate (UDP-GlcA) or UDP-alpha-D-xylose (UDP-Xyl) efflux to UDP-alpha-D-glucuronate (UDP-GlcA) influx into the ER lumen, which in turn stimulates glucuronidation and excretion of endobiotics and xenobiotics. This chain is Nucleotide sugar transporter SLC35B4 (Slc35b4), found in Mus musculus (Mouse).